Consider the following 240-residue polypeptide: tRNA (guanine-N(1)-)-methyltransferase (240 aa).

S-adenosyl-L-methionine is bound by residues G110 and 129-134 (LGDFVL).

It belongs to the RNA methyltransferase TrmD family. In terms of assembly, homodimer.

Its subcellular location is the cytoplasm. It catalyses the reaction guanosine(37) in tRNA + S-adenosyl-L-methionine = N(1)-methylguanosine(37) in tRNA + S-adenosyl-L-homocysteine + H(+). Functionally, specifically methylates guanosine-37 in various tRNAs. The chain is tRNA (guanine-N(1)-)-methyltransferase from Clostridium botulinum (strain ATCC 19397 / Type A).